The primary structure comprises 301 residues: GTPase Era (301 aa).

One can recognise an Era-type G domain in the interval 7 to 175 (YCGFIAIVGR…AAIVRKHLPE (169 aa)). A G1 region spans residues 15 to 22 (GRPNVGKS). Residue 15-22 (GRPNVGKS) participates in GTP binding. The G2 stretch occupies residues 41–45 (QTTRH). A G3 region spans residues 62 to 65 (DTPG). GTP-binding positions include 62 to 66 (DTPGL) and 124 to 127 (NKVD). Residues 124–127 (NKVD) form a G4 region. A G5 region spans residues 154–156 (ISA). Positions 206–283 (LGAELPYSVT…HLELWVKVKS (78 aa)) constitute a KH type-2 domain.

This sequence belongs to the TRAFAC class TrmE-Era-EngA-EngB-Septin-like GTPase superfamily. Era GTPase family. Monomer.

It is found in the cytoplasm. The protein localises to the cell inner membrane. In terms of biological role, an essential GTPase that binds both GDP and GTP, with rapid nucleotide exchange. Plays a role in 16S rRNA processing and 30S ribosomal subunit biogenesis and possibly also in cell cycle regulation and energy metabolism. The sequence is that of GTPase Era from Shigella dysenteriae serotype 1 (strain Sd197).